The chain runs to 167 residues: MEASNKLAVLLLWLVMAAATAVHPSYSENSPQDYLTPQNSARAAVGVGPVTWSTKLQQFAEKYAAQRAGDCRLQHSGGPYGENIFWGSAGFDWKAVDAVRSWVDEKQWYNYATNSCAAGKVCGHYTQVVWRATTSIGCARVVCRDNRGVFIICNYEPRGNIAGMKPY.

The N-terminal stretch at 1–27 (MEASNKLAVLLLWLVMAAATAVHPSYS) is a signal peptide. The SCP domain occupies 37-155 (PQNSARAAVG…NRGVFIICNY (119 aa)). Intrachain disulfides connect C71–C143, C116–C122, and C138–C153.

This sequence belongs to the CRISP family.

In terms of biological role, probably involved in the defense reaction of plants against pathogens. This is Pathogenesis-related protein PRMS (PRMS) from Zea mays (Maize).